The sequence spans 381 residues: E3 ubiquitin-protein ligase KCMF1 (381 aa).

N-acetylserine is present on Ser2. At Ser2 the chain carries Phosphoserine. The ZZ-type zinc finger occupies 4-60 (HEGVSCDACLKGNFRGRRYKCLICYDYDLCASCYESGATTTRHTTDHPMQCILTRVD). Zn(2+)-binding residues include Cys9, Cys12, Cys24, Cys27, Cys33, Cys36, His46, and His50. The C2H2-type zinc-finger motif lies at 78–101 (FTCPYCGKMGYTETSLQEHVTSEH). The segment at 154–193 (MFHPGRGLGGPRARRSNMHFTSSSTGGLSSSQSSYSPSNR) is disordered. Residues Ser169, Ser189, and Ser212 each carry the phosphoserine modification. Residues 175–191 (SSSTGGLSSSQSSYSPS) are compositionally biased toward low complexity. The stretch at 224-257 (ASQLQQLQMQLQLERQHAQAARQQLETARNATRR) forms a coiled coil. Residues 250-285 (TARNATRRTNTSSVTTTITQSTATTNTANTESSQQT) show a composition bias toward low complexity. Disordered stretches follow at residues 250-314 (TARN…SERA) and 329-348 (VREESSSSDEDERGEMADFG). The span at 297–314 (NDPKMSETERQSMESERA) shows a compositional bias: basic and acidic residues. Phosphoserine is present on residues Ser335 and Ser336.

This sequence belongs to the KCMF1 family. In terms of assembly, component of the SIFI complex, composed of KCMF1, UBR4 and calmodulin (CALM1, CALM2 or CALM3).

The protein resides in the cytoplasm. Its subcellular location is the late endosome. It localises to the lysosome. The enzyme catalyses S-ubiquitinyl-[E2 ubiquitin-conjugating enzyme]-L-cysteine + [acceptor protein]-L-lysine = [E2 ubiquitin-conjugating enzyme]-L-cysteine + N(6)-ubiquitinyl-[acceptor protein]-L-lysine.. Its pathway is protein modification; protein ubiquitination. E3 ubiquitin-protein ligase which accepts ubiquitin from an E2 ubiquitin-conjugating enzyme and then transfers it to targeted substrates, promoting their degradation by the proteasome. Together with UBR4, component of the N-end rule pathway: ubiquitinates proteins bearing specific N-terminal residues that are destabilizing according to the N-end rule, leading to their degradation. Does not ubiquitinate proteins that are acetylated at the N-terminus. Together with UBR4, part of a protein quality control pathway that catalyzes ubiquitination and degradation of proteins that have been oxidized in response to reactive oxygen species (ROS): recognizes proteins with an Arg-CysO3(H) degron at the N-terminus, and mediates assembly of heterotypic 'Lys-63'-/'Lys-27'-linked branched ubiquitin chains on oxidized proteins, leading to their degradation by autophagy. Catalytic component of the SIFI complex, a multiprotein complex required to inhibit the mitochondrial stress response after a specific stress event has been resolved: ubiquitinates and degrades (1) components of the HRI-mediated signaling of the integrated stress response, such as DELE1 and EIF2AK1/HRI, as well as (2) unimported mitochondrial precursors. Within the SIFI complex, UBR4 initiates ubiquitin chain that are further elongated or branched by KCMF1. The protein is E3 ubiquitin-protein ligase KCMF1 (KCMF1) of Bos taurus (Bovine).